Consider the following 812-residue polypeptide: Axin-2 (812 aa).

The disordered stretch occupies residues 1–43 (MNRTLTDPMVSSFREDDPRPPVPGEEGETTCHHPSKLAMMRPK). The RGS domain maps to 84 to 203 (SLHFLLGDQD…LTSDIYLEYV (120 aa)). Disordered stretches follow at residues 275 to 326 (SYRR…AIPP), 388 to 430 (ETMS…TCEE), 446 to 484 (TPGC…SSMN), and 609 to 726 (RQTK…SGCH). Polar residues predominate over residues 285 to 303 (NRFTSGYSFAPATSANDSE). Residues 305 to 323 (SSDALTDDSMSMTDSSVDA) show a composition bias toward low complexity. Residues 329 to 415 (LGSKKQLQRE…RDESEMSSSS (87 aa)) form an interaction with GSK3B region. Positions 388-397 (ETMSSLEERL) are enriched in basic and acidic residues. Residues 401–410 (QEEEERDESE) are compositionally biased toward acidic residues. Over residues 411-421 (MSSSSASHSLP) the composition is skewed to low complexity. Residues 415-467 (SASHSLPLLPPGTCEEDPQAILDEHLSRVLKTPGCQSPGLLRHSPRSRSPEQR) are interaction with beta-catenin. Polar residues predominate over residues 475 to 484 (STRSQSSSMN). A compositionally biased stretch (basic and acidic residues) spans 672 to 683 (EEARRRLEEVSK). One can recognise a DIX domain in the interval 730 to 812 (GSETVVTYFF…KILGKVDRMD (83 aa)).

Interacts with hwa; leading to promote the tankyrase-mediated degradation of axin1. Post-translationally, ADP-ribosylated by tankyrase tnks and tnks2. Poly-ADP-ribosylated protein is recognized by rnf146, followed by ubiquitination and subsequent activation of the Wnt signaling pathway. Ubiquitinated by rnf146 when poly-ADP-ribosylated, leading to its degradation and subsequent activation of the Wnt signaling pathway.

It localises to the cytoplasm. In terms of biological role, component of the beta-catenin destruction complex required for regulating ctnnb1 levels through phosphorylation and ubiquitination, and modulating Wnt-signaling. Controls dorsoventral patterning by down-regulating ctnnb1 to inhibit the Wnt signaling pathway and ventralize embryos. The sequence is that of Axin-2 (axin2) from Danio rerio (Zebrafish).